Consider the following 540-residue polypeptide: Putative BTB/POZ domain-containing protein R224 (540 aa).

The region spanning 16–88 (TDLELTLIDE…FYKNPIKYKN (73 aa)) is the BTB domain. Residues 356–376 (IFVSLLNDIIFVLSSINMYFI) form a helical membrane-spanning segment.

The protein belongs to the mimivirus BTB/WD family.

The protein localises to the membrane. This Acanthamoeba polyphaga (Amoeba) protein is Putative BTB/POZ domain-containing protein R224.